Consider the following 294-residue polypeptide: ATP phosphoribosyltransferase (294 aa).

Belongs to the ATP phosphoribosyltransferase family. Long subfamily. It depends on Mg(2+) as a cofactor.

The protein resides in the cytoplasm. The catalysed reaction is 1-(5-phospho-beta-D-ribosyl)-ATP + diphosphate = 5-phospho-alpha-D-ribose 1-diphosphate + ATP. It participates in amino-acid biosynthesis; L-histidine biosynthesis; L-histidine from 5-phospho-alpha-D-ribose 1-diphosphate: step 1/9. Its activity is regulated as follows. Feedback inhibited by histidine. Functionally, catalyzes the condensation of ATP and 5-phosphoribose 1-diphosphate to form N'-(5'-phosphoribosyl)-ATP (PR-ATP). Has a crucial role in the pathway because the rate of histidine biosynthesis seems to be controlled primarily by regulation of HisG enzymatic activity. This is ATP phosphoribosyltransferase from Chlorobium luteolum (strain DSM 273 / BCRC 81028 / 2530) (Pelodictyon luteolum).